The chain runs to 429 residues: Glucose-1-phosphate adenylyltransferase (429 aa).

Alpha-D-glucose 1-phosphate is bound by residues Gly-162, 177–178 (EK), and Ser-209.

This sequence belongs to the bacterial/plant glucose-1-phosphate adenylyltransferase family. As to quaternary structure, homotetramer.

The catalysed reaction is alpha-D-glucose 1-phosphate + ATP + H(+) = ADP-alpha-D-glucose + diphosphate. Its pathway is glycan biosynthesis; glycogen biosynthesis. In terms of biological role, involved in the biosynthesis of ADP-glucose, a building block required for the elongation reactions to produce glycogen. Catalyzes the reaction between ATP and alpha-D-glucose 1-phosphate (G1P) to produce pyrophosphate and ADP-Glc. In Nostoc punctiforme (strain ATCC 29133 / PCC 73102), this protein is Glucose-1-phosphate adenylyltransferase.